The sequence spans 556 residues: Dihydroxy-acid dehydratase (556 aa).

Asp78 is a Mg(2+) binding site. Cys119 contributes to the [2Fe-2S] cluster binding site. Residues Asp120 and Lys121 each coordinate Mg(2+). At Lys121 the chain carries N6-carboxylysine. [2Fe-2S] cluster is bound at residue Cys195. Glu446 is a binding site for Mg(2+). The Proton acceptor role is filled by Ser472.

The protein belongs to the IlvD/Edd family. As to quaternary structure, homodimer. [2Fe-2S] cluster serves as cofactor. The cofactor is Mg(2+).

The catalysed reaction is (2R)-2,3-dihydroxy-3-methylbutanoate = 3-methyl-2-oxobutanoate + H2O. The enzyme catalyses (2R,3R)-2,3-dihydroxy-3-methylpentanoate = (S)-3-methyl-2-oxopentanoate + H2O. The protein operates within amino-acid biosynthesis; L-isoleucine biosynthesis; L-isoleucine from 2-oxobutanoate: step 3/4. It functions in the pathway amino-acid biosynthesis; L-valine biosynthesis; L-valine from pyruvate: step 3/4. Functions in the biosynthesis of branched-chain amino acids. Catalyzes the dehydration of (2R,3R)-2,3-dihydroxy-3-methylpentanoate (2,3-dihydroxy-3-methylvalerate) into 2-oxo-3-methylpentanoate (2-oxo-3-methylvalerate) and of (2R)-2,3-dihydroxy-3-methylbutanoate (2,3-dihydroxyisovalerate) into 2-oxo-3-methylbutanoate (2-oxoisovalerate), the penultimate precursor to L-isoleucine and L-valine, respectively. This chain is Dihydroxy-acid dehydratase, found in Desulfatibacillum aliphaticivorans.